The primary structure comprises 136 residues: Plastocyanin (136 aa).

The first 34 residues, 1 to 34 (MSLVFNLVKRLQLILLSLVVGGLAVAFLSNPAAA), serve as a signal peptide directing secretion. Positions 35-136 (ETYIVKMGSD…GMVGKIIVNG (102 aa)) constitute a Plastocyanin-like domain. Cu cation is bound by residues His-73, Cys-120, His-123, and Met-128.

Belongs to the plastocyanin family. Requires Cu(2+) as cofactor.

The protein localises to the cellular thylakoid membrane. Its function is as follows. Participates in electron transfer between P700 and the cytochrome b6-f complex in photosystem I. The chain is Plastocyanin from Synechococcus sp. (strain JA-2-3B'a(2-13)) (Cyanobacteria bacterium Yellowstone B-Prime).